The sequence spans 288 residues: Protein CREG2 (288 aa).

The signal sequence occupies residues 1 to 31; that stretch reads MSLSGRERPAWPGSRLSWLLCCSALLSPAAG. A disordered region spans residues 78–100; the sequence is AHKEDTHLRPRGSARARPAPAAR. A glycan (N-linked (GlcNAc...) asparagine) is linked at N164.

Belongs to the CREG family. As to expression, brain specific.

The protein localises to the secreted. In Mus musculus (Mouse), this protein is Protein CREG2 (Creg2).